Here is a 427-residue protein sequence, read N- to C-terminus: 3-phosphoshikimate 1-carboxyvinyltransferase (427 aa).

3-phosphoshikimate contacts are provided by Lys-20, Ser-21, and Arg-25. Lys-20 serves as a coordination point for phosphoenolpyruvate. Residues Gly-92 and Arg-120 each contribute to the phosphoenolpyruvate site. Ser-166, Gln-168, Asp-312, and Lys-339 together coordinate 3-phosphoshikimate. Gln-168 contributes to the phosphoenolpyruvate binding site. Catalysis depends on Asp-312, which acts as the Proton acceptor. Positions 343 and 385 each coordinate phosphoenolpyruvate.

Belongs to the EPSP synthase family. As to quaternary structure, monomer.

The protein resides in the cytoplasm. It catalyses the reaction 3-phosphoshikimate + phosphoenolpyruvate = 5-O-(1-carboxyvinyl)-3-phosphoshikimate + phosphate. Its pathway is metabolic intermediate biosynthesis; chorismate biosynthesis; chorismate from D-erythrose 4-phosphate and phosphoenolpyruvate: step 6/7. Its function is as follows. Catalyzes the transfer of the enolpyruvyl moiety of phosphoenolpyruvate (PEP) to the 5-hydroxyl of shikimate-3-phosphate (S3P) to produce enolpyruvyl shikimate-3-phosphate and inorganic phosphate. The chain is 3-phosphoshikimate 1-carboxyvinyltransferase from Streptococcus mutans serotype c (strain ATCC 700610 / UA159).